The following is a 423-amino-acid chain: G2/mitotic-specific cyclin-B1 (423 aa).

Position 116 is a phosphoserine; by CDK1 (S116). Position 118 is a phosphoserine (S118). At S123 the chain carries Phosphoserine; by PLK1. S137 carries the phosphoserine modification. Interaction with CDK2 stretches follow at residues 159–167 (EYVKDIYAY) and 248–251 (YEEM). At T311 the chain carries Phosphothreonine.

This sequence belongs to the cyclin family. Cyclin AB subfamily. In terms of assembly, interacts with the CDC2 protein kinase to form a serine/threonine kinase holoenzyme complex also known as maturation promoting factor (MPF). The cyclin subunit imparts substrate specificity to the complex. Binds HEI10. Interacts with catalytically active RALBP1 and CDC2 during mitosis to form an endocytotic complex during interphase. Interacts with CCNF; interaction is required for nuclear localization. Interacts with CDK5RAP3. Interacts with RFPL4A and UBE2A. Interacts with INCA1. In terms of processing, ubiquitinated by the SCF(NIPA) complex during interphase, leading to its destruction. Deubiquitinated by USP22 during G2/M phase. Phosphorylated by PLK1 at Ser-123 on centrosomes during prophase: phosphorylation by PLK1 does not cause nuclear import. Phosphorylation at Ser-137 was also reported to be mediated by PLK1 but Ser-123 seems to be the primary phosphorylation site.

It localises to the cytoplasm. Its subcellular location is the nucleus. The protein localises to the cytoskeleton. It is found in the microtubule organizing center. The protein resides in the centrosome. Functionally, essential for the control of the cell cycle at the G2/M (mitosis) transition. The sequence is that of G2/mitotic-specific cyclin-B1 (Ccnb1) from Rattus norvegicus (Rat).